A 514-amino-acid polypeptide reads, in one-letter code: Ankyrin repeat domain-containing protein 34B (514 aa).

4 ANK repeats span residues 9–38, 42–79, 83–113, and 117–146; these read SEGN…YINE, RGET…DPNI, SGKT…DLSL, and SSYS…AKGK. Residues 220–249 are disordered; it reads NDDTWDPGSPVRKPALAPKGPKLPHAPPWV. A Phosphoserine modification is found at Ser-263. A Phosphothreonine modification is found at Thr-272. Residue Ser-296 is modified to Phosphoserine.

The protein belongs to the ANKRD34 family. Phosphorylated.

The protein resides in the cytoplasm. The protein localises to the nucleus. The polypeptide is Ankyrin repeat domain-containing protein 34B (ANKRD34B) (Homo sapiens (Human)).